Consider the following 475-residue polypeptide: Ribulose bisphosphate carboxylase large chain (475 aa).

The propeptide occupies 1–2 (MS). Proline 3 bears the N-acetylproline mark. Lysine 14 carries the N6,N6,N6-trimethyllysine modification. The substrate site is built by asparagine 123 and threonine 173. Lysine 175 functions as the Proton acceptor in the catalytic mechanism. Residue lysine 177 participates in substrate binding. 3 residues coordinate Mg(2+): lysine 201, aspartate 203, and glutamate 204. Lysine 201 bears the N6-carboxylysine mark. Histidine 294 acts as the Proton acceptor in catalysis. Residues arginine 295, histidine 327, and serine 379 each coordinate substrate.

This sequence belongs to the RuBisCO large chain family. Type I subfamily. Heterohexadecamer of 8 large chains and 8 small chains; disulfide-linked. The disulfide link is formed within the large subunit homodimers. Requires Mg(2+) as cofactor. In terms of processing, the disulfide bond which can form in the large chain dimeric partners within the hexadecamer appears to be associated with oxidative stress and protein turnover.

The protein localises to the plastid. It is found in the chloroplast. The catalysed reaction is 2 (2R)-3-phosphoglycerate + 2 H(+) = D-ribulose 1,5-bisphosphate + CO2 + H2O. The enzyme catalyses D-ribulose 1,5-bisphosphate + O2 = 2-phosphoglycolate + (2R)-3-phosphoglycerate + 2 H(+). Functionally, ruBisCO catalyzes two reactions: the carboxylation of D-ribulose 1,5-bisphosphate, the primary event in carbon dioxide fixation, as well as the oxidative fragmentation of the pentose substrate in the photorespiration process. Both reactions occur simultaneously and in competition at the same active site. The chain is Ribulose bisphosphate carboxylase large chain from Cerastium glomeratum (Sticky chickweed).